The sequence spans 882 residues: MTGNEIRSRFLKFFQDHGHTVVPSSALIPHNDPTLLFINAGMNQFKDVFLGREKRDYVRATSAQKCVRAGGKHNDLENVGQTARHHTFFEMLGNFSFGDYFKKEAIDHAWKFLTEEMGLPKDKLWVTVFREDDEAYDIWRDQQGIPEERLIRMGEKDNFWSMGDTGPCGPCSEILIDQGESMSCGDECGIGKCDCDRYLELWNLVFMQFNRDADGTMTPLPKPSIDTGMGLERITAVMQGVQSNYDCDLLRGIIAHVEELSGKRYGDNAEHDMSMRVIADHSRATAFLIADGVLPSNEGRGYVLRRIMRRAARHAKMLGFADPVLYRTATFVLQSMAEAYPEPAQRADYVAKIVKIEEERFIQTLDNGLRILTEEVERLKAANATVLPGDVAFKLYDTFGFPLDLTADILRGENVTIDEDGFEACMEEQRQKAREHWKGSGEEAISGIYRQLAEEGARTDFTGYGELTGQSEILAILLDGQPVSSAPAGAKVEIVTAATPFYGESGGQTGDCGTLAAGDAEVTITDTKKPLPELFVHVGEIAAGTLQTGETATLTVDRERRQATALNHTATHLLQAALVEVLGEHVKQAGSLVTPERLRFDFIHFSAMSAEELERVETLVNCRIRENAGVDTREMDHEQAVAEGATALFGEKYGDKVRVVRVGDISMELCGGTHANASGDIGLFKILQETGIAAGVRRIEAVTGAKALQVVRDQERTLDDLASLIKTDRPQLEARLRKLLERQKELEREIESLQGKLNADQAGDLLQQATEIDGISVVCGRVDNLDGKALRELADQVRDRLSSGVLILGSAHEGKAGLLVAVTKDLTKRLQAGALVKQLAAMVGGGGGGRPDLAQAGGSKPEQLDEALASVPQRISEALNAA.

4 residues coordinate Zn(2+): His-568, His-572, Cys-670, and His-674.

Belongs to the class-II aminoacyl-tRNA synthetase family. It depends on Zn(2+) as a cofactor.

It is found in the cytoplasm. The catalysed reaction is tRNA(Ala) + L-alanine + ATP = L-alanyl-tRNA(Ala) + AMP + diphosphate. Catalyzes the attachment of alanine to tRNA(Ala) in a two-step reaction: alanine is first activated by ATP to form Ala-AMP and then transferred to the acceptor end of tRNA(Ala). Also edits incorrectly charged Ser-tRNA(Ala) and Gly-tRNA(Ala) via its editing domain. This is Alanine--tRNA ligase from Syntrophotalea carbinolica (strain DSM 2380 / NBRC 103641 / GraBd1) (Pelobacter carbinolicus).